Here is a 367-residue protein sequence, read N- to C-terminus: Teichoic acid glycerol-phosphate primase (367 aa).

It belongs to the CDP-glycerol glycerophosphotransferase family.

It localises to the cell membrane. It carries out the reaction N-acetyl-beta-D-mannosaminyl-(1-&gt;4)-N-acetyl-alpha-D-glucosaminyl di-trans,octa-cis-undecaprenyl diphosphate + CDP-glycerol = 4-O-[(2R)-glycerylphospho]-N-acetyl-beta-D-mannosaminyl-(1-&gt;4)-N-acetyl-alpha-D-glucosaminyl di-trans,octa-cis-undecaprenyl diphosphate + CMP + H(+). Its pathway is cell wall biogenesis; poly(ribitol phosphate) teichoic acid biosynthesis. In terms of biological role, catalyzes the addition of a single glycerol phosphate residue to the prenoldiphosphate-linked disaccharide. This chain is Teichoic acid glycerol-phosphate primase (tarB), found in Staphylococcus aureus (strain NCTC 8325 / PS 47).